The chain runs to 767 residues: Phosphoribosylformylglycinamidine synthase subunit PurL (767 aa).

The active site involves His46. Residues Tyr49 and Lys88 each coordinate ATP. Mg(2+) is bound at residue Glu90. Substrate-binding positions include 91-94 (SHNH) and Arg113. His92 serves as the catalytic Proton acceptor. Asp114 is a binding site for Mg(2+). Gln237 serves as a coordination point for substrate. Asp265 is a Mg(2+) binding site. Substrate is bound at residue 309–311 (ESQ). The ATP site is built by Asp498 and Gly535. Residue Asn536 coordinates Mg(2+). Position 538 (Ser538) interacts with substrate.

This sequence belongs to the FGAMS family. Monomer. Part of the FGAM synthase complex composed of 1 PurL, 1 PurQ and 2 PurS subunits.

It is found in the cytoplasm. It carries out the reaction N(2)-formyl-N(1)-(5-phospho-beta-D-ribosyl)glycinamide + L-glutamine + ATP + H2O = 2-formamido-N(1)-(5-O-phospho-beta-D-ribosyl)acetamidine + L-glutamate + ADP + phosphate + H(+). The protein operates within purine metabolism; IMP biosynthesis via de novo pathway; 5-amino-1-(5-phospho-D-ribosyl)imidazole from N(2)-formyl-N(1)-(5-phospho-D-ribosyl)glycinamide: step 1/2. Part of the phosphoribosylformylglycinamidine synthase complex involved in the purines biosynthetic pathway. Catalyzes the ATP-dependent conversion of formylglycinamide ribonucleotide (FGAR) and glutamine to yield formylglycinamidine ribonucleotide (FGAM) and glutamate. The FGAM synthase complex is composed of three subunits. PurQ produces an ammonia molecule by converting glutamine to glutamate. PurL transfers the ammonia molecule to FGAR to form FGAM in an ATP-dependent manner. PurS interacts with PurQ and PurL and is thought to assist in the transfer of the ammonia molecule from PurQ to PurL. The protein is Phosphoribosylformylglycinamidine synthase subunit PurL of Anaeromyxobacter sp. (strain Fw109-5).